The sequence spans 77 residues: Large ribosomal subunit protein uL29 (77 aa).

Belongs to the universal ribosomal protein uL29 family.

The polypeptide is Large ribosomal subunit protein uL29 (Gluconobacter oxydans (strain 621H) (Gluconobacter suboxydans)).